Reading from the N-terminus, the 542-residue chain is La-related protein 7 homolog (542 aa).

Positions 112-239 (VAEELDIKES…KRRFPFNLEQ (128 aa)) constitute an HTH La-type RNA-binding domain. In terms of domain architecture, RRM spans 247–335 (RTLYIDFLPP…GSIRIITYKK (89 aa)). The region spanning 374–542 (EIKQNCLIKI…KQNITQNYNK (169 aa)) is the xRRM domain.

It belongs to the LARP7 family. In terms of assembly, component of the telomerase holoenzyme complex, composed of the catalytic core (the catalytic subunit TERT, the telomerase RNA template component TER and TAP65/p65), which is associated with two heterotrimeric subcomplexes: (i) the replication protein A (RPA)-related subcomplex, composed of TEB1, RPA2/TEB2 and RPA3/TEB3 and (ii) the CST-like subcomplex, composed of TAP75/p75, TAP45/p45 and TAP19/p19. TEB1 and the CST-like subcomplex are tethered to the catalytic core by TAP50/p50.

It localises to the chromosome. Its subcellular location is the telomere. In terms of biological role, RNA-binding protein required for assembly of the holoenzyme telomerase ribonucleoprotein (RNP) complex. Telomerase is an essential ribonucleoprotein enzyme that copies new telomeric repeats onto chromosome ends by repetitively synthesizing the short telomere-repeat sequence 5'-TTGGGG-3' using an RNA template component TER. TAP65/p65 specifically binds telomerase RNA template TER and is required for biogenesis and placement of the TER stem-terminus element: TAP65/p65 first protects the 3'-end of TER from degradation and acts as a chaperone to correctly fold TER for protein binding; it then bends TER stem-loop IV to position it for interaction of stem-loop IV with catalytic TERT RNA-binding domain. This is La-related protein 7 homolog from Tetrahymena thermophila (strain SB210).